Here is a 119-residue protein sequence, read N- to C-terminus: Large ribosomal subunit protein bL20 (119 aa).

This sequence belongs to the bacterial ribosomal protein bL20 family.

Binds directly to 23S ribosomal RNA and is necessary for the in vitro assembly process of the 50S ribosomal subunit. It is not involved in the protein synthesizing functions of that subunit. The protein is Large ribosomal subunit protein bL20 of Halalkalibacterium halodurans (strain ATCC BAA-125 / DSM 18197 / FERM 7344 / JCM 9153 / C-125) (Bacillus halodurans).